The following is a 273-amino-acid chain: Proteasome subunit beta type-10 (273 aa).

The residue at position 1 (methionine 1) is an N-acetylmethionine. The propeptide at 1–39 (MLKPALEPRGGFSFENCQRNASLERVLPGLKVPHARKTG) is removed in mature form. Threonine 40 (nucleophile) is an active-site residue. At serine 230 the chain carries Phosphoserine.

This sequence belongs to the peptidase T1B family. As to quaternary structure, the 26S proteasome consists of a 20S proteasome core and two 19S regulatory subunits. The 20S proteasome core is composed of 28 subunits that are arranged in four stacked rings, resulting in a barrel-shaped structure. The two end rings are each formed by seven alpha subunits, and the two central rings are each formed by seven beta subunits. The catalytic chamber with the active sites is on the inside of the barrel. Component of the immunoproteasome, where it displaces the equivalent housekeeping subunit PSMB7. Component of the spermatoproteasome, a form of the proteasome specifically found in testis. (Microbial infection) Interacts with HIV-1 TAT protein. Autocleaved. The resulting N-terminal Thr residue of the mature subunit is responsible for the nucleophile proteolytic activity.

The protein localises to the cytoplasm. It localises to the nucleus. The enzyme catalyses Cleavage of peptide bonds with very broad specificity.. Its function is as follows. The proteasome is a multicatalytic proteinase complex which is characterized by its ability to cleave peptides with Arg, Phe, Tyr, Leu, and Glu adjacent to the leaving group at neutral or slightly basic pH. The proteasome has an ATP-dependent proteolytic activity. This subunit is involved in antigen processing to generate class I binding peptides. The polypeptide is Proteasome subunit beta type-10 (PSMB10) (Homo sapiens (Human)).